Reading from the N-terminus, the 440-residue chain is Lysine histidine transporter-like 6 (440 aa).

Positions 1–10 (MVSSSPVSPS) are enriched in polar residues. A disordered region spans residues 1 to 25 (MVSSSPVSPSKETDRKSGEKWTAED). At 1 to 31 (MVSSSPVSPSKETDRKSGEKWTAEDPSRPAK) the chain is on the cytoplasmic side. A compositionally biased stretch (basic and acidic residues) spans 11–25 (KETDRKSGEKWTAED). The helical transmembrane segment at 32-51 (WWYSTFHTVTAMIGAGVLSL) threads the bilayer. Over 52-61 (PYAMAYLGWG) the chain is Extracellular. A helical membrane pass occupies residues 62–82 (PGTFVLAMTWGLTLNTMWQMV). The Cytoplasmic portion of the chain corresponds to 83-109 (QLHECVPGTRFDRYIDLGRYAFGPKLG). A helical membrane pass occupies residues 110-130 (PWIVLPQQLIVQVGCNIVYMV). At 131–152 (TGGKCLKQFVEITCSTCTPVRQ) the chain is on the extracellular side. Residues 153-173 (SYWILGFGGVHFILSQLPNFN) traverse the membrane as a helical segment. Position 174 (serine 174) is a topological domain, cytoplasmic. A helical transmembrane segment spans residues 175 to 195 (VAGVSLAAAVMSLCYSTIAWG). At 196 to 221 (GSIAHGRVPDVSYDYKATNPGDFTFR) the chain is on the extracellular side. Residues 222 to 242 (VFNALGQISFAFAGHAVALEI) form a helical membrane-spanning segment. The Cytoplasmic segment spans residues 243-261 (QATMPSTPERPSKVPMWQG). The chain crosses the membrane as a helical span at residues 262–282 (VIGAYVVNAVCYFPVALICYW). Residues 283 to 300 (AFGQDVDDNVLMNLQRPA) lie on the Extracellular side of the membrane. Residues 301 to 321 (WLIAAANLMVVVHVIGSYQVF) form a helical membrane-spanning segment. At 322-353 (AMPVFDLLERMMVNKFGFKHGVVLRFFTRTIY) the chain is on the cytoplasmic side. Helical transmembrane passes span 354–374 (VAFTLFIGVSFPFFGDLLGFF) and 375–395 (GGFGFAPTSFFLPSIMWLIIK). Over 396 to 399 (KPRR) the chain is Cytoplasmic. A helical transmembrane segment spans residues 400 to 420 (FSVTWFVNWISIIVGVFIMLA). Residues 421–440 (STIGGLRNIIADSSTYSFYA) lie on the Extracellular side of the membrane.

It belongs to the amino acid/polyamine transporter 2 family. Amino acid/auxin permease (AAAP) (TC 2.A.18.2) subfamily.

The protein localises to the cell membrane. Amino acid transporter. This is Lysine histidine transporter-like 6 from Arabidopsis thaliana (Mouse-ear cress).